The following is a 452-amino-acid chain: Phosphoglucosamine mutase (452 aa).

Ser-104 serves as the catalytic Phosphoserine intermediate. Mg(2+)-binding residues include Ser-104, Asp-245, Asp-247, and Asp-249. Residue Ser-104 is modified to Phosphoserine.

Belongs to the phosphohexose mutase family. Mg(2+) is required as a cofactor. Activated by phosphorylation.

The catalysed reaction is alpha-D-glucosamine 1-phosphate = D-glucosamine 6-phosphate. Catalyzes the conversion of glucosamine-6-phosphate to glucosamine-1-phosphate. The polypeptide is Phosphoglucosamine mutase (Gluconacetobacter diazotrophicus (strain ATCC 49037 / DSM 5601 / CCUG 37298 / CIP 103539 / LMG 7603 / PAl5)).